The primary structure comprises 324 residues: Beta-ketoacyl-[acyl-carrier-protein] synthase III (324 aa).

Residues cysteine 113 and histidine 251 contribute to the active site. The segment at 252-256 (QANKR) is ACP-binding. Asparagine 281 is an active-site residue.

It belongs to the thiolase-like superfamily. FabH family. In terms of assembly, homodimer.

It localises to the cytoplasm. It carries out the reaction malonyl-[ACP] + acetyl-CoA + H(+) = 3-oxobutanoyl-[ACP] + CO2 + CoA. It participates in lipid metabolism; fatty acid biosynthesis. In terms of biological role, catalyzes the condensation reaction of fatty acid synthesis by the addition to an acyl acceptor of two carbons from malonyl-ACP. Catalyzes the first condensation reaction which initiates fatty acid synthesis and may therefore play a role in governing the total rate of fatty acid production. Possesses both acetoacetyl-ACP synthase and acetyl transacylase activities. Its substrate specificity determines the biosynthesis of branched-chain and/or straight-chain of fatty acids. In Bartonella bacilliformis (strain ATCC 35685 / KC583 / Herrer 020/F12,63), this protein is Beta-ketoacyl-[acyl-carrier-protein] synthase III.